A 373-amino-acid chain; its full sequence is Arabinonate dehydratase (373 aa).

Mg(2+) contacts are provided by D199, E225, and E251.

It belongs to the mandelate racemase/muconate lactonizing enzyme family. In terms of assembly, homooctamer. Mg(2+) serves as cofactor.

It carries out the reaction D-arabinonate = 2-dehydro-3-deoxy-D-arabinonate + H2O. Inhibited by substrate levels above 8 mM. Its function is as follows. Catalyzes the dehydration of D-arabinonate to 2-keto-3-deoxy-D-arabinonate. Participates in a pentose oxidation pathway that converts D-arabinonate to 2-oxoglutarate. The sequence is that of Arabinonate dehydratase from Saccharolobus solfataricus (strain ATCC 35092 / DSM 1617 / JCM 11322 / P2) (Sulfolobus solfataricus).